Consider the following 352-residue polypeptide: MHFLDQAKIYLKSGAGGPGAVSFRREKYIEYGGPDGGNGGKGGDIVFEAVQGLNTLIDFRYAQHFKAKRGAHGQGKDRTGAGAPDLVIKVPVGTQVLSEDKEEVLADFTEVGQRVTFLAGGMGGRGNASYKSSTNRAPRQHQPGQAGEEMWVWLRLKLLADVGLLGLPNAGKSTFINAVSNAKAKVGHYAFTTLVPKLGVVNHKGREFVLADIPGLIEGAAEGAGIGDRFLGHIERCRVLIHLVDISGEDPAEAFQTVNAELEAYGEGLEDKPQLVALNKLDLADEELVAGFAEELLEAGADEVFAVSGATGAGIEPLLDAVLGYLPDSTSTETKGSEVEEVDEEGGEWSPI.

An Obg domain is found at 1 to 159 (MHFLDQAKIY…MWVWLRLKLL (159 aa)). The 168-residue stretch at 160–327 (ADVGLLGLPN…LLDAVLGYLP (168 aa)) folds into the OBG-type G domain. GTP contacts are provided by residues 166-173 (GLPNAGKS), 191-195 (FTTLV), 212-215 (DIPG), 279-282 (NKLD), and 308-310 (SGA). The Mg(2+) site is built by Ser173 and Thr193. The segment at 329-352 (STSTETKGSEVEEVDEEGGEWSPI) is disordered. Over residues 339 to 352 (VEEVDEEGGEWSPI) the composition is skewed to acidic residues.

This sequence belongs to the TRAFAC class OBG-HflX-like GTPase superfamily. OBG GTPase family. Monomer. It depends on Mg(2+) as a cofactor.

It is found in the cytoplasm. An essential GTPase which binds GTP, GDP and possibly (p)ppGpp with moderate affinity, with high nucleotide exchange rates and a fairly low GTP hydrolysis rate. Plays a role in control of the cell cycle, stress response, ribosome biogenesis and in those bacteria that undergo differentiation, in morphogenesis control. This Erythrobacter litoralis (strain HTCC2594) protein is GTPase Obg.